A 490-amino-acid chain; its full sequence is Angiopoietin-related protein 1 (490 aa).

The N-terminal stretch at 1–22 (MKAFVWTLSVLLFLLGSGHCKG) is a signal peptide. Residues 79–167 (ITRMDLENLK…LNVTTEMLKM (89 aa)) are a coiled coil. N-linked (GlcNAc...) asparagine glycans are attached at residues Asn159 and Asn187. Positions 270–490 (FINEGPFKDC…AVQMMIKPID (221 aa)) constitute a Fibrinogen C-terminal domain. Disulfide bonds link Cys279–Cys308 and Cys431–Cys444.

The protein resides in the secreted. This is Angiopoietin-related protein 1 (Angptl1) from Mus musculus (Mouse).